The chain runs to 471 residues: MTDLPDSTRWQLWIVAFGFFMQSLDTTIVNTALPSMAQSLGESPLHMHMVIVSYVLTVAVMLPASGWLADKVGVRNIFFTAIVLFTLGSLFCALSGTLNELLLARALQGVGGAMMVPVGRLTVMKIVPREQYMAAMTFVTLPGQVGPLLGPALGGLLVEYASWHWIFLINIPVGIIGAIATLMLMPNYTMQTRRFDLSGFLLLAVGMAVLTLALDGSKGTGFSPLAIAGLVAVGVVALVLYLLHAQNNNRALFSLKLFRTRTFSLGLAGSFAGRIGSGMLPFMTPVFLQIGLGFSPFHAGLMMIPMVLGSMGMKRIVVQVVNRFGYRRVLVATTLGLSLVTLLFMTTALLGWYYVLPFVLFLQGMVNSTRFSSMNTLTLKDLPDNLASSGNSLLSMIMQLSMSIGVTIAGLLLGLFGSQHVSVDSGTTQTVFMYTWLSMAFIIALPAFVFARVPSDTHQNVAISRRKRSAQ.

The Periplasmic segment spans residues 1 to 11; the sequence is MTDLPDSTRWQ. A helical membrane pass occupies residues 12–32; that stretch reads LWIVAFGFFMQSLDTTIVNTA. Over 33 to 48 the chain is Cytoplasmic; that stretch reads LPSMAQSLGESPLHMH. The helical transmembrane segment at 49 to 69 threads the bilayer; it reads MVIVSYVLTVAVMLPASGWLA. Topologically, residues 70-76 are periplasmic; the sequence is DKVGVRN. A helical transmembrane segment spans residues 77–97; the sequence is IFFTAIVLFTLGSLFCALSGT. The Cytoplasmic segment spans residues 98-101; that stretch reads LNEL. The helical transmembrane segment at 102–124 threads the bilayer; the sequence is LLARALQGVGGAMMVPVGRLTVM. The Periplasmic portion of the chain corresponds to 125 to 137; it reads KIVPREQYMAAMT. The helical transmembrane segment at 138-158 threads the bilayer; the sequence is FVTLPGQVGPLLGPALGGLLV. Over 159 to 164 the chain is Cytoplasmic; sequence EYASWH. A helical membrane pass occupies residues 165 to 185; that stretch reads WIFLINIPVGIIGAIATLMLM. Over 186–196 the chain is Periplasmic; that stretch reads PNYTMQTRRFD. Residues 197–217 form a helical membrane-spanning segment; sequence LSGFLLLAVGMAVLTLALDGS. Residues 218-224 are Cytoplasmic-facing; the sequence is KGTGFSP. Residues 225-245 form a helical membrane-spanning segment; the sequence is LAIAGLVAVGVVALVLYLLHA. At 246-262 the chain is on the periplasmic side; it reads QNNNRALFSLKLFRTRT. Residues 263-283 traverse the membrane as a helical segment; sequence FSLGLAGSFAGRIGSGMLPFM. The Cytoplasmic segment spans residues 284–285; sequence TP. The helical transmembrane segment at 286 to 306 threads the bilayer; the sequence is VFLQIGLGFSPFHAGLMMIPM. Over 307–341 the chain is Periplasmic; the sequence is VLGSMGMKRIVVQVVNRFGYRRVLVATTLGLSLVT. Residues 342-362 traverse the membrane as a helical segment; it reads LLFMTTALLGWYYVLPFVLFL. The Cytoplasmic portion of the chain corresponds to 363–395; that stretch reads QGMVNSTRFSSMNTLTLKDLPDNLASSGNSLLS. Residues 396 to 416 form a helical membrane-spanning segment; it reads MIMQLSMSIGVTIAGLLLGLF. Residues 417–430 are Periplasmic-facing; sequence GSQHVSVDSGTTQT. The helical transmembrane segment at 431-451 threads the bilayer; sequence VFMYTWLSMAFIIALPAFVFA. The Cytoplasmic segment spans residues 452 to 471; sequence RVPSDTHQNVAISRRKRSAQ.

The protein belongs to the major facilitator superfamily. TCR/Tet family.

It is found in the cell inner membrane. This is Putative multidrug resistance protein MdtD from Escherichia coli O45:K1 (strain S88 / ExPEC).